We begin with the raw amino-acid sequence, 194 residues long: dCTP deaminase (194 aa).

Residues 110–115 (RSSLAR), aspartate 128, 136–138 (VLE), tyrosine 171, lysine 178, and glutamine 182 contribute to the dCTP site. The active-site Proton donor/acceptor is the glutamate 138.

This sequence belongs to the dCTP deaminase family. Homotrimer.

It carries out the reaction dCTP + H2O + H(+) = dUTP + NH4(+). It functions in the pathway pyrimidine metabolism; dUMP biosynthesis; dUMP from dCTP (dUTP route): step 1/2. Its function is as follows. Catalyzes the deamination of dCTP to dUTP. This Haemophilus ducreyi (strain 35000HP / ATCC 700724) protein is dCTP deaminase.